A 323-amino-acid polypeptide reads, in one-letter code: Lipoyl synthase (323 aa).

The tract at residues Met-1–Glu-27 is disordered. [4Fe-4S] cluster contacts are provided by Cys-61, Cys-66, Cys-72, Cys-87, Cys-91, Cys-94, and Ser-300. A Radical SAM core domain is found at Trp-73–Leu-289.

Belongs to the radical SAM superfamily. Lipoyl synthase family. The cofactor is [4Fe-4S] cluster.

It localises to the cytoplasm. It catalyses the reaction [[Fe-S] cluster scaffold protein carrying a second [4Fe-4S](2+) cluster] + N(6)-octanoyl-L-lysyl-[protein] + 2 oxidized [2Fe-2S]-[ferredoxin] + 2 S-adenosyl-L-methionine + 4 H(+) = [[Fe-S] cluster scaffold protein] + N(6)-[(R)-dihydrolipoyl]-L-lysyl-[protein] + 4 Fe(3+) + 2 hydrogen sulfide + 2 5'-deoxyadenosine + 2 L-methionine + 2 reduced [2Fe-2S]-[ferredoxin]. The protein operates within protein modification; protein lipoylation via endogenous pathway; protein N(6)-(lipoyl)lysine from octanoyl-[acyl-carrier-protein]: step 2/2. In terms of biological role, catalyzes the radical-mediated insertion of two sulfur atoms into the C-6 and C-8 positions of the octanoyl moiety bound to the lipoyl domains of lipoate-dependent enzymes, thereby converting the octanoylated domains into lipoylated derivatives. The polypeptide is Lipoyl synthase (Agrobacterium fabrum (strain C58 / ATCC 33970) (Agrobacterium tumefaciens (strain C58))).